Here is an 81-residue protein sequence, read N- to C-terminus: Neuronatin (81 aa).

It belongs to the neuronatin family.

Functionally, may participate in the maintenance of segment identity in the hindbrain and pituitary development, and maturation or maintenance of the overall structure of the nervous system. May function as a regulatory subunit of ion channels. This chain is Neuronatin (NNAT), found in Sus scrofa (Pig).